The sequence spans 143 residues: Peptide methionine sulfoxide reductase MsrB (143 aa).

Residues 5–127 (KEKRLKELNR…NSAALKFIPK (123 aa)) enclose the MsrB domain. The active-site Nucleophile is the C116.

Belongs to the MsrB Met sulfoxide reductase family.

It carries out the reaction L-methionyl-[protein] + [thioredoxin]-disulfide + H2O = L-methionyl-(R)-S-oxide-[protein] + [thioredoxin]-dithiol. In Bacillus pumilus (strain SAFR-032), this protein is Peptide methionine sulfoxide reductase MsrB.